The primary structure comprises 83 residues: Conotoxin VnMKLT1-022 (83 aa).

An N-terminal signal peptide occupies residues 1-22 (MKLMCMMIVAVLFLTAWTFVTA). Positions 23-55 (DDSINGPENRRIWEKLLSKTRDEMKNPEASKLN) are excised as a propeptide. Intrachain disulfides connect Cys59-Cys74, Cys66-Cys78, and Cys73-Cys82.

The protein belongs to the conotoxin O1 superfamily. Expressed by the venom duct.

It is found in the secreted. The chain is Conotoxin VnMKLT1-022 from Conus ventricosus (Mediterranean cone).